We begin with the raw amino-acid sequence, 134 residues long: Interleukin-5 (134 aa).

The signal sequence occupies residues 1 to 19 (MRMLLHLSLLALGAAYVYA). Thr-22 carries an O-linked (GalNAc...) threonine glycan. Asn-47 and Asn-90 each carry an N-linked (GlcNAc...) asparagine glycan.

The protein belongs to the IL-5 family. In terms of assembly, homodimer; disulfide-linked. Interacts with IL5RA. Interacts with CSF2RB.

The protein localises to the secreted. Homodimeric cytokine expressed predominantly by T-lymphocytes and NK cells that plays an important role in the survival, differentiation, and chemotaxis of eosinophils. Also acts on activated and resting B-cells to induce immunoglobulin production, growth, and differentiation. Mechanistically, exerts its biological effects through a receptor composed of IL5RA subunit and the cytokine receptor common subunit beta/CSF2RB. Binding to the receptor leads to activation of various kinases including LYN, SYK and JAK2 and thereby propagates signals through the RAS-MAPK and JAK-STAT5 pathways respectively. The polypeptide is Interleukin-5 (IL5) (Macaca mulatta (Rhesus macaque)).